The primary structure comprises 529 residues: Bifunctional purine biosynthesis protein PurH (529 aa).

One can recognise an MGS-like domain in the interval 1–148; it reads MQQRRSVRRA…KNHKDVAIVV (148 aa).

The protein belongs to the PurH family.

The catalysed reaction is (6R)-10-formyltetrahydrofolate + 5-amino-1-(5-phospho-beta-D-ribosyl)imidazole-4-carboxamide = 5-formamido-1-(5-phospho-D-ribosyl)imidazole-4-carboxamide + (6S)-5,6,7,8-tetrahydrofolate. It carries out the reaction IMP + H2O = 5-formamido-1-(5-phospho-D-ribosyl)imidazole-4-carboxamide. It functions in the pathway purine metabolism; IMP biosynthesis via de novo pathway; 5-formamido-1-(5-phospho-D-ribosyl)imidazole-4-carboxamide from 5-amino-1-(5-phospho-D-ribosyl)imidazole-4-carboxamide (10-formyl THF route): step 1/1. It participates in purine metabolism; IMP biosynthesis via de novo pathway; IMP from 5-formamido-1-(5-phospho-D-ribosyl)imidazole-4-carboxamide: step 1/1. This chain is Bifunctional purine biosynthesis protein PurH, found in Salmonella arizonae (strain ATCC BAA-731 / CDC346-86 / RSK2980).